The sequence spans 550 residues: MQPPWGLALPLLLPWVTGGVGTSPWDYGLSALAHQPGVCQYGTKMACCYGWKRNNKGVCEAMCEPRCKFGECVGPNKCRCFPGYTGKTCTQDVNECGVKPRPCQHRCVNTHGSYKCFCLSGHMLLPDATCSNSRTCARLNCQYGCEDTEEGPRCVCPSSGLRLGPNGRVCLDIDECASSKAVCPSNRRCVNTFGSYYCKCHIGFELKYIGRRYDCVDINECALNTHPCSPHANCLNTRGSFKCKCKQGYRGNGLQCSVIPEHSVKEILTAPGTIKDRIKKLLAHKRTMKKKVKLKMVTPRPASTRVPKVNLPYSSEEGVSRGRNYDGEQKKKEEGKRERLEEEKGEKTLRNEVEQERTLRGDVFSPKVNEAEDLDLVYVQRKELNSKLKHKDLNISVDCSFDLGVCDWKQDREDDFDWHPADRDNDVGYYMAVPALAGHKKNIGRLKLLLPNLTPQSNFCLLFDYRLAGDKVGKLRVFVKNSNNALAWEETKNEDGRWRTGKIQLYQGIDTTKSVIFEAERGKGKTGEIAVDGVLLVSGLCPDDFLSVEG.

An N-terminal signal peptide occupies residues 1–18 (MQPPWGLALPLLLPWVTG). The 36-residue stretch at 55–90 (NKGVCEAMCEPRCKFGECVGPNKCRCFPGYTGKTCT) folds into the EGF-like 1 domain. Cystine bridges form between C59/C72, C63/C78, C80/C89, C96/C107, C103/C116, and C118/C130. One can recognise an EGF-like 2; calcium-binding domain in the interval 92-131 (DVNECGVKPRPCQHRCVNTHGSYKCFCLSGHMLLPDATCS). The region spanning 135–171 (TCARLNCQYGCEDTEEGPRCVCPSSGLRLGPNGRVCL) is the EGF-like 3 domain. An EGF-like 4; calcium-binding domain is found at 172–210 (DIDECASSKAVCPSNRRCVNTFGSYYCKCHIGFELKYIG). 5 cysteine pairs are disulfide-bonded: C176–C189, C183–C198, C221–C234, C228–C243, and C245–C256. Residues 217–257 (DINECALNTHPCSPHANCLNTRGSFKCKCKQGYRGNGLQCS) enclose the EGF-like 5; calcium-binding domain. The interval 295–354 (KMVTPRPASTRVPKVNLPYSSEEGVSRGRNYDGEQKKKEEGKRERLEEEKGEKTLRNEVE) is disordered. Basic and acidic residues predominate over residues 318 to 354 (GVSRGRNYDGEQKKKEEGKRERLEEEKGEKTLRNEVE). The stretch at 327–357 (GEQKKKEEGKRERLEEEKGEKTLRNEVEQER) forms a coiled coil. N394 carries N-linked (GlcNAc...) asparagine glycosylation. In terms of domain architecture, MAM spans 397-543 (VDCSFDLGVC…VLLVSGLCPD (147 aa)).

Belongs to the nephronectin family. As to expression, expressed at basement membrane of pelage follicles (at protein level).

Its subcellular location is the secreted. The protein localises to the extracellular space. It localises to the extracellular matrix. The protein resides in the basement membrane. May bind integrin alpha-8/beta-1 and play a role in hair follicle morphogenesis. Promotes matrix assembly. The polypeptide is Epidermal growth factor-like protein 6 (Egfl6) (Mus musculus (Mouse)).